Reading from the N-terminus, the 600-residue chain is Adenine deaminase 4 (600 aa).

Belongs to the metallo-dependent hydrolases superfamily. Adenine deaminase family. Mn(2+) is required as a cofactor.

The catalysed reaction is adenine + H2O + H(+) = hypoxanthine + NH4(+). This is Adenine deaminase 4 from Rhizobium meliloti (strain 1021) (Ensifer meliloti).